Here is a 125-residue protein sequence, read N- to C-terminus: Probable growth factor FPV211 (125 aa).

Positions 1 to 48 (MKEPLIEVKREYNLIKTLTGKKFVVSTSIVVVLLIINMIFYGIRIHEL) are cleaved as a signal peptide. The EGF-like domain maps to 80–120 (LFEKCKSKFNNFCIYGECMNIINLDKKFCICNKGYTGNRCD). 3 cysteine pairs are disulfide-bonded: Cys84–Cys97, Cys92–Cys108, and Cys110–Cys119.

Its subcellular location is the secreted. The protein is Probable growth factor FPV211 of Vertebrata (FPV).